Consider the following 234-residue polypeptide: Methylamine utilization ferredoxin-type protein MauM (234 aa).

4Fe-4S ferredoxin-type domains are found at residues 61-91 (ALAE…LASW), 98-131 (GTPF…PLLT), 140-176 (VAVL…LKPI), and 184-215 (QIPT…VLPR). Residues cysteine 71, cysteine 74, cysteine 77, cysteine 81, cysteine 109, cysteine 112, cysteine 117, cysteine 121, cysteine 149, cysteine 157, cysteine 160, cysteine 164, cysteine 193, cysteine 196, cysteine 199, and cysteine 203 each coordinate [4Fe-4S] cluster.

It participates in one-carbon metabolism; methylamine degradation. Involved in electron transfer. This Methylobacillus flagellatus (strain ATCC 51484 / DSM 6875 / VKM B-1610 / KT) protein is Methylamine utilization ferredoxin-type protein MauM (mauM).